The chain runs to 183 residues: Translocon-associated protein subunit beta (183 aa).

A signal peptide spans 1–17 (MRLLAVVVLALLAVSQA). The Lumenal segment spans residues 18–146 (EEGARLLASK…REFDRRFSPH (129 aa)). N-linked (GlcNAc...) (high mannose) asparagine glycosylation is present at Asn88. Residue Asn104 is glycosylated (N-linked (GlcNAc...) asparagine). Residues 147–167 (FLDWAAFGVMTLPSIGIPLLL) traverse the membrane as a helical segment. Over 168-183 (WYSSKRKYDTPKPKKN) the chain is Cytoplasmic.

The protein belongs to the TRAP-beta family. As to quaternary structure, heterotetramer of TRAP-alpha, TRAP-beta, TRAP-delta and TRAP-gamma. Interacts with STING1.

Its subcellular location is the endoplasmic reticulum membrane. In terms of biological role, TRAP proteins are part of a complex whose function is to bind calcium to the ER membrane and thereby regulate the retention of ER resident proteins. The polypeptide is Translocon-associated protein subunit beta (Ssr2) (Mus musculus (Mouse)).